The following is a 469-amino-acid chain: 3-isopropylmalate dehydratase large subunit (469 aa).

[4Fe-4S] cluster contacts are provided by Cys347, Cys408, and Cys411.

The protein belongs to the aconitase/IPM isomerase family. LeuC type 1 subfamily. In terms of assembly, heterodimer of LeuC and LeuD. It depends on [4Fe-4S] cluster as a cofactor.

The enzyme catalyses (2R,3S)-3-isopropylmalate = (2S)-2-isopropylmalate. The protein operates within amino-acid biosynthesis; L-leucine biosynthesis; L-leucine from 3-methyl-2-oxobutanoate: step 2/4. Catalyzes the isomerization between 2-isopropylmalate and 3-isopropylmalate, via the formation of 2-isopropylmaleate. The polypeptide is 3-isopropylmalate dehydratase large subunit (Actinobacillus pleuropneumoniae serotype 5b (strain L20)).